Consider the following 206-residue polypeptide: Probable thymidylate kinase (206 aa).

10–17 is an ATP binding site; sequence GIDGSGKS.

Belongs to the thymidylate kinase family.

It catalyses the reaction dTMP + ATP = dTDP + ADP. The protein is Probable thymidylate kinase of Methanosarcina mazei (strain ATCC BAA-159 / DSM 3647 / Goe1 / Go1 / JCM 11833 / OCM 88) (Methanosarcina frisia).